A 602-amino-acid chain; its full sequence is Arginine--tRNA ligase (602 aa).

The 'HIGH' region motif lies at 132–142 (ANPTGPLHVGH).

This sequence belongs to the class-I aminoacyl-tRNA synthetase family. Monomer.

It localises to the cytoplasm. The catalysed reaction is tRNA(Arg) + L-arginine + ATP = L-arginyl-tRNA(Arg) + AMP + diphosphate. The protein is Arginine--tRNA ligase of Cupriavidus metallidurans (strain ATCC 43123 / DSM 2839 / NBRC 102507 / CH34) (Ralstonia metallidurans).